Consider the following 335-residue polypeptide: Zinc-type alcohol dehydrogenase-like protein SAS2087 (335 aa).

This sequence belongs to the zinc-containing alcohol dehydrogenase family. Quinone oxidoreductase subfamily.

In Staphylococcus aureus (strain MSSA476), this protein is Zinc-type alcohol dehydrogenase-like protein SAS2087.